We begin with the raw amino-acid sequence, 119 residues long: Secreted RxLR effector protein RXLR-C04 (119 aa).

An N-terminal signal peptide occupies residues 1-22 (MRLSYIFVVVATIITNCDIASA). Residues 40–77 (RILRQTNDSDDLEPIRHAMLDMELLEKIAKDPKYAEEV) carry the RxLR-dEER motif. N-linked (GlcNAc...) asparagine glycosylation occurs at asparagine 46.

Belongs to the RxLR effector family.

The protein resides in the secreted. Its subcellular location is the host cytoplasm. The protein localises to the host nucleus. Functionally, secreted effector that suppresses pattern-triggered immunity (PTI) in plant host. The protein is Secreted RxLR effector protein RXLR-C04 of Plasmopara halstedii (Downy mildew of sunflower).